The sequence spans 362 residues: Ribosome-binding ATPase YchF (362 aa).

One can recognise an OBG-type G domain in the interval leucine 2–leucine 258. Asparagine 11–threonine 16 provides a ligand contact to ATP. 2 residues coordinate Mg(2+): serine 15 and threonine 35. Residues glycine 281–leucine 347 enclose the TGS domain.

This sequence belongs to the TRAFAC class OBG-HflX-like GTPase superfamily. OBG GTPase family. YchF/OLA1 subfamily. Mg(2+) is required as a cofactor.

Its function is as follows. ATPase that binds to both the 70S ribosome and the 50S ribosomal subunit in a nucleotide-independent manner. In Mycoplasma pneumoniae (strain ATCC 29342 / M129 / Subtype 1) (Mycoplasmoides pneumoniae), this protein is Ribosome-binding ATPase YchF.